We begin with the raw amino-acid sequence, 151 residues long: 3-hydroxyacyl-[acyl-carrier-protein] dehydratase FabZ (151 aa).

Residue H56 is part of the active site.

It belongs to the thioester dehydratase family. FabZ subfamily.

The protein localises to the cytoplasm. It catalyses the reaction a (3R)-hydroxyacyl-[ACP] = a (2E)-enoyl-[ACP] + H2O. In terms of biological role, involved in unsaturated fatty acids biosynthesis. Catalyzes the dehydration of short chain beta-hydroxyacyl-ACPs and long chain saturated and unsaturated beta-hydroxyacyl-ACPs. This is 3-hydroxyacyl-[acyl-carrier-protein] dehydratase FabZ from Nitrobacter hamburgensis (strain DSM 10229 / NCIMB 13809 / X14).